Reading from the N-terminus, the 681-residue chain is SRSF protein kinase 2 (681 aa).

Positions 1 to 63 (MSVNSEKSSS…EQEDPADYCK (63 aa)) are disordered. Positions 22 to 41 (LVPPPPPPPPPPPLPDPAPP) are enriched in pro residues. A compositionally biased stretch (acidic residues) spans 42 to 59 (EPEEEILGSDDEEQEDPA). Residue Ser50 is modified to Phosphoserine. Residues 79-681 (YHVIRKLGWG…ECLRHPWLNS (603 aa)) form the Protein kinase domain. Residues 85–93 (LGWGHFSTV) and Lys108 each bind ATP. The active-site Proton acceptor is Asp212. Disordered regions lie at residues 237-270 (WQKAGAPPPSGSAVSTAPQQKPIGKISKNKKKKL), 302-452 (ENIT…PLFS), and 467-499 (GSPLTEQEESSPSHDRSRTVSASSTGDLPKTKT). Phosphothreonine is present on residues Thr331 and Thr332. Ser378 bears the Phosphoserine mark. Residues 395-419 (QLEDEEDDEDDCANPEEYNLDEPNA) are compositionally biased toward acidic residues. A compositionally biased stretch (polar residues) spans 421-431 (SDYTYSSSYEQ). Ser468 carries the post-translational modification Phosphoserine. The residue at position 471 (Thr471) is a Phosphothreonine. Residues Ser477, Ser479, and Ser483 each carry the phosphoserine modification. At Thr485 the chain carries Phosphothreonine; by PKB/AKT1. Residues Ser487 and Ser490 each carry the phosphoserine modification. Ser581 carries the post-translational modification Phosphoserine; by CK2.

The protein belongs to the protein kinase superfamily. CMGC Ser/Thr protein kinase family. Associates with U4/U6-U5 tri-small nuclear ribonucleoproteins (U4/U6-U5 tri-snRNPs). Interacts with PKB/AKT1 in a phosphorylation-dependent manner. The phosphorylated form (by PKB/AKT1) interacts with YWHAB and YWHAE. Interaction with YWHAB suppresses its cleavage by caspases and inhibits the release of its N-terminal pro-apoptotic fragment. Interacts with SFN. Interacts with ACIN1. Interacts with POLR2A/RNA polymerase II; the interaction occurs during the co-transcriptional formation of inappropriate R-loops. Mg(2+) is required as a cofactor. Post-translationally, phosphorylation at Thr-485 by PKB/AKT1 enhances its stimulatory activity in triggering cyclin-D1 (CCND1) expression and promoting apoptosis in neurons, which can be blocked by YWHAB. It also enhances its protein kinase activity toward ACIN1 and SRSF2, promotes its nuclear translocation and prevents its proteolytic cleavage. In terms of processing, proteolytically cleaved at Asp-137 and Asp-401 by caspase-3 during apoptotic cell death. Cleavage at Asp-137 which is the major site of cleavage, produces a small N-terminal fragment that translocates into nucleus and promotes VP16-induced apoptosis. As to expression, expressed in testes, lung and brain.

The protein resides in the cytoplasm. Its subcellular location is the nucleus. It localises to the nucleoplasm. It is found in the nucleus speckle. The protein localises to the chromosome. It catalyses the reaction L-seryl-[protein] + ATP = O-phospho-L-seryl-[protein] + ADP + H(+). The enzyme catalyses L-threonyl-[protein] + ATP = O-phospho-L-threonyl-[protein] + ADP + H(+). Activated by phosphorylation on Ser-50 and Ser-581. Its function is as follows. Serine/arginine-rich protein-specific kinase which specifically phosphorylates its substrates at serine residues located in regions rich in arginine/serine dipeptides, known as RS domains and is involved in the phosphorylation of SR splicing factors and the regulation of splicing. Promotes neuronal apoptosis by up-regulating cyclin-D1 (CCND1) expression. This is done by the phosphorylation of SRSF2, leading to the suppression of p53/TP53 phosphorylation thereby relieving the repressive effect of p53/TP53 on cyclin-D1 (CCND1) expression. Phosphorylates ACIN1, and redistributes it from the nuclear speckles to the nucleoplasm, resulting in cyclin A1 but not cyclin A2 up-regulation. Plays an essential role in spliceosomal B complex formation via the phosphorylation of DDX23/PRP28. Probably by phosphorylating DDX23, leads to the suppression of incorrect R-loops formed during transcription; R-loops are composed of a DNA:RNA hybrid and the associated non-template single-stranded DNA. The chain is SRSF protein kinase 2 from Mus musculus (Mouse).